The chain runs to 297 residues: MNAPAPKPGLVIVDKPAGMTSHDVVSKLRRAFSTRKVGHAGTLDPMATGVLVVGIERGTRFLAHMVASTKAYDATIRLGAATSTDDAEGEVISTTDASGLDHSTILAEIVNLTGDIMQKPTKVSAIKIDGKRAHERVRDGEEVDIPARPVTVSVFDVLDYHVDGEFYDLDVRVHCSSGTYIRALARDLGNALQVGGHLTALRRTEVGPFTLNDATPLSKLQENPELSLNLDQALTRSYPVLDITEDEGVDLSMGKWLEPRGLKGVHAAVTPSGKAVALIEEKGKRLATVFVAHPNTL.

Residue Asp44 is the Nucleophile of the active site.

Belongs to the pseudouridine synthase TruB family. Type 1 subfamily.

The catalysed reaction is uridine(55) in tRNA = pseudouridine(55) in tRNA. Functionally, responsible for synthesis of pseudouridine from uracil-55 in the psi GC loop of transfer RNAs. In Corynebacterium glutamicum (strain ATCC 13032 / DSM 20300 / JCM 1318 / BCRC 11384 / CCUG 27702 / LMG 3730 / NBRC 12168 / NCIMB 10025 / NRRL B-2784 / 534), this protein is tRNA pseudouridine synthase B.